Here is a 77-residue protein sequence, read N- to C-terminus: Large ribosomal subunit protein uL29 (77 aa).

Belongs to the universal ribosomal protein uL29 family.

The sequence is that of Large ribosomal subunit protein uL29 from Corynebacterium urealyticum (strain ATCC 43042 / DSM 7109).